The sequence spans 362 residues: 3-dehydroquinate synthase (362 aa).

Residues 70–75, 104–108, 128–129, Lys-141, Lys-150, and 168–171 each bind NAD(+); these read EGEQYK, GVIGD, TT, and TLTT. Glu-183, His-246, and His-263 together coordinate Zn(2+).

This sequence belongs to the sugar phosphate cyclases superfamily. Dehydroquinate synthase family. Requires Co(2+) as cofactor. Zn(2+) serves as cofactor. The cofactor is NAD(+).

It localises to the cytoplasm. The catalysed reaction is 7-phospho-2-dehydro-3-deoxy-D-arabino-heptonate = 3-dehydroquinate + phosphate. Its pathway is metabolic intermediate biosynthesis; chorismate biosynthesis; chorismate from D-erythrose 4-phosphate and phosphoenolpyruvate: step 2/7. Catalyzes the conversion of 3-deoxy-D-arabino-heptulosonate 7-phosphate (DAHP) to dehydroquinate (DHQ). This chain is 3-dehydroquinate synthase, found in Histophilus somni (strain 2336) (Haemophilus somnus).